The sequence spans 155 residues: MGLRAGSRCRADHLAQPQPQGHLAPVLRCGECWRARGLPGGCCLHTEGGCSLGAQAGWRTAGWEARGRRDLGLETTSAHSRSLLHLSSWRRPDVGEAAGAELLQRAPLQQPDPAQAAVEGGLLARLPRPQDQGCGQHRPHSPRLVDIALPGGGWT.

The disordered stretch occupies residues 130-155 (QDQGCGQHRPHSPRLVDIALPGGGWT).

The sequence is that of Protein FAM201A (FAM201A) from Homo sapiens (Human).